We begin with the raw amino-acid sequence, 309 residues long: NAD kinase (309 aa).

The active-site Proton acceptor is aspartate 89. NAD(+) contacts are provided by residues 89-90, 163-164, histidine 174, arginine 191, aspartate 193, and 204-209; these read DG, NE, and TAYSLS.

It belongs to the NAD kinase family. Requires a divalent metal cation as cofactor.

The protein localises to the cytoplasm. It carries out the reaction NAD(+) + ATP = ADP + NADP(+) + H(+). In terms of biological role, involved in the regulation of the intracellular balance of NAD and NADP, and is a key enzyme in the biosynthesis of NADP. Catalyzes specifically the phosphorylation on 2'-hydroxyl of the adenosine moiety of NAD to yield NADP. This is NAD kinase from Shewanella frigidimarina (strain NCIMB 400).